Reading from the N-terminus, the 104-residue chain is MYAIIETGGKQYWVKPGQNLQVERLNAEVGANVEVKVLWANDAEGTSADAKAGTDSAKVTAQVVRHLRGKKIIIFKKRPKKGYERTQGHRQDLSEIKITDIKIG.

Belongs to the bacterial ribosomal protein bL21 family. As to quaternary structure, part of the 50S ribosomal subunit. Contacts protein L20.

This protein binds to 23S rRNA in the presence of protein L20. The polypeptide is Large ribosomal subunit protein bL21 (Elusimicrobium minutum (strain Pei191)).